A 347-amino-acid chain; its full sequence is Very-long-chain 3-oxoacyl-CoA reductase (347 aa).

The chain crosses the membrane as a helical span at residues 20 to 40 (LLWVVFGLGVLKCTTLSLRFL). Positions 66, 120, 147, 223, 227, 256, and 258 each coordinate NADP(+). The active-site Proton donor is Tyr-223. The Lowers pKa of active site Tyr role is filled by Lys-227.

Belongs to the short-chain dehydrogenases/reductases (SDR) family. In terms of assembly, interacts with the fatty acid elongation system components ELO3 and TSC13.

It localises to the endoplasmic reticulum membrane. It catalyses the reaction a very-long-chain (3R)-3-hydroxyacyl-CoA + NADP(+) = a very-long-chain 3-oxoacyl-CoA + NADPH + H(+). It participates in lipid metabolism; fatty acid biosynthesis. Component of the microsomal membrane bound fatty acid elongation system, which produces the 26-carbon very long-chain fatty acids (VLCFA) from palmitate. Catalyzes the reduction of the 3-ketoacyl-CoA intermediate that is formed in each cycle of fatty acid elongation. VLCFAs serve as precursors for ceramide and sphingolipids. This chain is Very-long-chain 3-oxoacyl-CoA reductase, found in Saccharomyces cerevisiae (strain RM11-1a) (Baker's yeast).